Here is a 602-residue protein sequence, read N- to C-terminus: Aspartate--tRNA(Asp/Asn) ligase (602 aa).

Residue E175 participates in L-aspartate binding. An aspartate region spans residues 199–202; sequence QIFK. R221 lines the L-aspartate pocket. Residues 221-223 and Q230 each bind ATP; that span reads RDE. H458 lines the L-aspartate pocket. Residue E492 coordinates ATP. R499 contributes to the L-aspartate binding site. 544–547 is an ATP binding site; that stretch reads GLDR.

The protein belongs to the class-II aminoacyl-tRNA synthetase family. Type 1 subfamily. In terms of assembly, homodimer.

It is found in the cytoplasm. It catalyses the reaction tRNA(Asx) + L-aspartate + ATP = L-aspartyl-tRNA(Asx) + AMP + diphosphate. Functionally, aspartyl-tRNA synthetase with relaxed tRNA specificity since it is able to aspartylate not only its cognate tRNA(Asp) but also tRNA(Asn). Reaction proceeds in two steps: L-aspartate is first activated by ATP to form Asp-AMP and then transferred to the acceptor end of tRNA(Asp/Asn). The chain is Aspartate--tRNA(Asp/Asn) ligase from Cupriavidus necator (strain ATCC 17699 / DSM 428 / KCTC 22496 / NCIMB 10442 / H16 / Stanier 337) (Ralstonia eutropha).